Here is a 157-residue protein sequence, read N- to C-terminus: uncharacterized protein (157 aa).

The signal sequence occupies residues Met1 to Ala28.

This is an uncharacterized protein from Bacillus subtilis (strain 168).